The sequence spans 208 residues: Sodium/potassium-transporting ATPase subunit beta-1-interacting protein 2 (208 aa).

Helical transmembrane passes span 1–23 (MGYCSGRCTLIFICGMQLVCVLE), 35–55 (APILANFVHIIIVILGLFGTI), 64–84 (GYAVWLVLWVTWNVFVICFYL), and 148–168 (VAHSSLQIVLALAGFIYACYV).

This sequence belongs to the NKAIN family. As to quaternary structure, interacts with ATP1B1. Detected in the brain only and specifically in neurons; expressed in multiple regions such as cerebral cortex, thalamus, cerebellum, olfactory bulb and brainstem, but not in the hippocampus.

It is found in the cell membrane. This is Sodium/potassium-transporting ATPase subunit beta-1-interacting protein 2 (Nkain2) from Mus musculus (Mouse).